Here is a 459-residue protein sequence, read N- to C-terminus: Argininosuccinate lyase (459 aa).

The protein belongs to the lyase 1 family. Argininosuccinate lyase subfamily.

Its subcellular location is the cytoplasm. It catalyses the reaction 2-(N(omega)-L-arginino)succinate = fumarate + L-arginine. It functions in the pathway amino-acid biosynthesis; L-arginine biosynthesis; L-arginine from L-ornithine and carbamoyl phosphate: step 3/3. The protein is Argininosuccinate lyase of Buchnera aphidicola subsp. Schizaphis graminum (strain Sg).